The sequence spans 481 residues: Bestrophin homolog 17 (481 aa).

Topologically, residues 1–27 (MTVSYQLDVSSGNPLLFLRLLGRWRGS) are cytoplasmic. A helical transmembrane segment spans residues 28-48 (IWKSVVGDLFVWLLFYYAIYF). The Extracellular segment spans residues 49–95 (AYRYAFSKQLQTVFEEISIHTDDRMKYLPLTFMLGFFVTTVFERWRS). A helical membrane pass occupies residues 96–116 (ALNVMPFIESVALSVAVLLPG). Over 117–230 (KGREDRLTRR…AMETLIKFDA (114 aa)) the chain is Cytoplasmic. Residues 231 to 251 (IPIPIAYPQVVFLAVRVYFAI) form a helical membrane-spanning segment. The Extracellular portion of the chain corresponds to 252-274 (CLVSRQFLISDMKSKTQMDWPVP). Residues 275-295 (IMTVLEFIFVIGWMKVAEVLL) form a helical membrane-spanning segment. Topologically, residues 296 to 481 (NPLGEDDDDF…SSEESVDKKG (186 aa)) are cytoplasmic. The disordered stretch occupies residues 427-481 (AGMLNKSTQPDRPTMETVSEEHEPSHFYRGDRVHSSDSGLSKTQQSSEESVDKKG). A compositionally biased stretch (basic and acidic residues) spans 445-461 (SEEHEPSHFYRGDRVHS). Over residues 462-474 (SDSGLSKTQQSSE) the composition is skewed to polar residues.

The protein belongs to the anion channel-forming bestrophin (TC 1.A.46) family. Calcium-sensitive chloride channel subfamily. As to quaternary structure, forms oligomers.

It localises to the cell membrane. Forms chloride channels. This Caenorhabditis elegans protein is Bestrophin homolog 17.